Here is a 438-residue protein sequence, read N- to C-terminus: Transposon Ty2-LR1 Gag polyprotein (438 aa).

Composition is skewed to polar residues over residues 1–11, 19–39, and 49–60; these read MESQQLHQNPH, ASVT…SASN, and KVNSQQETTPGT. 3 disordered regions span residues 1 to 86, 364 to 397, and 419 to 438; these read MESQ…GQYQ, KNVS…AKAH, and SSQY…TERI. Residues 295 to 397 are RNA-binding; the sequence is ENNINVSDRL…SSKPRAAKAH (103 aa). The segment covering 369 to 381 has biased composition (low complexity); that stretch reads TSPNTTNTKVTTR.

In terms of assembly, homotrimer.

The protein localises to the cytoplasm. Functionally, capsid protein (CA) is the structural component of the virus-like particle (VLP), forming the shell that encapsulates the retrotransposons dimeric RNA genome. The particles are assembled from trimer-clustered units and there are holes in the capsid shells that allow for the diffusion of macromolecules. CA also has nucleocapsid-like chaperone activity, promoting primer tRNA(i)-Met annealing to the multipartite primer-binding site (PBS), dimerization of Ty2 RNA and initiation of reverse transcription. This Saccharomyces cerevisiae (strain ATCC 204508 / S288c) (Baker's yeast) protein is Transposon Ty2-LR1 Gag polyprotein (TY2A-LR1).